A 77-amino-acid polypeptide reads, in one-letter code: UPF0291 protein RBAM_017680 (77 aa).

Positions 55–77 (IDPEGNDVTPEKLKREQQKNNLH) are disordered. The segment covering 63–77 (TPEKLKREQQKNNLH) has biased composition (basic and acidic residues).

It belongs to the UPF0291 family.

The protein localises to the cytoplasm. This Bacillus velezensis (strain DSM 23117 / BGSC 10A6 / LMG 26770 / FZB42) (Bacillus amyloliquefaciens subsp. plantarum) protein is UPF0291 protein RBAM_017680.